A 359-amino-acid chain; its full sequence is tRNA-specific 2-thiouridylase MnmA (359 aa).

ATP contacts are provided by residues 7 to 14 (GLSGGVDS) and leucine 33. Cysteine 94 acts as the Nucleophile in catalysis. A disulfide bond links cysteine 94 and cysteine 193. Glycine 119 contacts ATP. Residues 143-145 (KDQ) are interaction with tRNA. Residue cysteine 193 is the Cysteine persulfide intermediate of the active site. The segment at 298–299 (RY) is interaction with tRNA.

The protein belongs to the MnmA/TRMU family.

The protein localises to the cytoplasm. It carries out the reaction S-sulfanyl-L-cysteinyl-[protein] + uridine(34) in tRNA + AH2 + ATP = 2-thiouridine(34) in tRNA + L-cysteinyl-[protein] + A + AMP + diphosphate + H(+). In terms of biological role, catalyzes the 2-thiolation of uridine at the wobble position (U34) of tRNA, leading to the formation of s(2)U34. This is tRNA-specific 2-thiouridylase MnmA from Trichodesmium erythraeum (strain IMS101).